A 393-amino-acid polypeptide reads, in one-letter code: Putative mitochondrial cysteine synthase (393 aa).

A helical membrane pass occupies residues 12–31 (LAWRECISIASVLIGAYASY). Lys86 bears the N6-(pyridoxal phosphate)lysine mark. Pyridoxal 5'-phosphate is bound by residues 230–234 (GTGGT) and Ser338.

Belongs to the cysteine synthase/cystathionine beta-synthase family. The cofactor is pyridoxal 5'-phosphate.

The protein localises to the mitochondrion. It localises to the mitochondrion outer membrane. It catalyses the reaction O-acetyl-L-serine + hydrogen sulfide = L-cysteine + acetate. In terms of biological role, putative cysteine synthase that catalyzes the conversion of O-acetyl-L-serine (OAS) into cysteine, the last step in the cysteine biosynthesis pathway. However, this CS-like protein is unlikely to function in cysteine biosynthesis. It seems that in S.cerevisiae cysteine biosynthesis occurs exclusively through the cystathionine pathway and not via direct incorporation of sulfur into OAS. This chain is Putative mitochondrial cysteine synthase, found in Saccharomyces cerevisiae (strain ATCC 204508 / S288c) (Baker's yeast).